A 604-amino-acid chain; its full sequence is Hemagglutinin glycoprotein (604 aa).

At 1 to 37 (MLPYQDKVGAFYKDNARANSTKLSLVTEGHGGRRPPY) the chain is on the intravirion side. Residues 38–58 (LLFVLLILLVGILALLAITGV) traverse the membrane as a helical segment. The Virion surface segment spans residues 59–604 (RFHQVSTSNM…LVRIRFSCNR (546 aa)). Asn-149, Asn-422, and Asn-587 each carry an N-linked (GlcNAc...) asparagine; by host glycan.

It belongs to the paramyxoviruses hemagglutinin-neuraminidase family. Non-sialidase subfamily. As to quaternary structure, binds canine SLAMF1 at the cell surface.

Its subcellular location is the virion membrane. The protein resides in the host cell membrane. Its function is as follows. Attaches the virus to cell receptors and thereby initiating infection. Binding of H protein to the receptor induces a conformational change that allows the F protein to trigger virion/cell membranes fusion. The cellular receptor might be SLAM, and may explain the lymphotropism of the virus. This is Hemagglutinin glycoprotein (H) from Ailuropoda melanoleuca (Giant panda).